Consider the following 65-residue polypeptide: DNA-directed RNA polymerase subunit Rpo10 (65 aa).

Zn(2+)-binding residues include C7, C10, C44, and C45.

This sequence belongs to the archaeal Rpo10/eukaryotic RPB10 RNA polymerase subunit family. In terms of assembly, part of the RNA polymerase complex. It depends on Zn(2+) as a cofactor.

It localises to the cytoplasm. It carries out the reaction RNA(n) + a ribonucleoside 5'-triphosphate = RNA(n+1) + diphosphate. DNA-dependent RNA polymerase (RNAP) catalyzes the transcription of DNA into RNA using the four ribonucleoside triphosphates as substrates. This Pyrobaculum arsenaticum (strain DSM 13514 / JCM 11321 / PZ6) protein is DNA-directed RNA polymerase subunit Rpo10.